The following is a 112-amino-acid chain: UPF0102 protein JJD26997_0163 (112 aa).

The protein belongs to the UPF0102 family.

The polypeptide is UPF0102 protein JJD26997_0163 (Campylobacter jejuni subsp. doylei (strain ATCC BAA-1458 / RM4099 / 269.97)).